The following is a 160-amino-acid chain: MAEKTYPMTKAEKEQLEKELEELKLVRRPEVVERIKIARSYGDLSENSEYDAAKDEQAFVEGQISTLETQIRFAEIIDSDAVAKDEVAIGKTVVVQEVGTTDKDTYHIVGSAGADIFSGKISNESPIAQALIGKKKGDIADIVSPATTYQVEIISVEKTK.

Residues 1 to 71 (MAEKTYPMTK…GQISTLETQI (71 aa)) are a coiled coil.

This sequence belongs to the GreA/GreB family.

Its function is as follows. Necessary for efficient RNA polymerase transcription elongation past template-encoded arresting sites. The arresting sites in DNA have the property of trapping a certain fraction of elongating RNA polymerases that pass through, resulting in locked ternary complexes. Cleavage of the nascent transcript by cleavage factors such as GreA or GreB allows the resumption of elongation from the new 3'terminus. GreA releases sequences of 2 to 3 nucleotides. This Streptococcus uberis (strain ATCC BAA-854 / 0140J) protein is Transcription elongation factor GreA.